The primary structure comprises 162 residues: Large ribosomal subunit protein uL30 (162 aa).

The protein belongs to the universal ribosomal protein uL30 family. As to quaternary structure, part of the 50S ribosomal subunit.

The polypeptide is Large ribosomal subunit protein uL30 (Desulfurococcus amylolyticus (strain DSM 18924 / JCM 16383 / VKM B-2413 / 1221n) (Desulfurococcus kamchatkensis)).